We begin with the raw amino-acid sequence, 301 residues long: Probable alpha-L-glutamate ligase (301 aa).

The ATP-grasp domain maps to 104–287 (LQLLSRRGIG…VAGMIIEHLE (184 aa)). Residues K141, 178–179 (EY), D187, and 211–213 (RSN) contribute to the ATP site. Residues D248, E260, and N262 each contribute to the Mg(2+) site. D248, E260, and N262 together coordinate Mn(2+).

This sequence belongs to the RimK family. It depends on Mg(2+) as a cofactor. Mn(2+) serves as cofactor.

The sequence is that of Probable alpha-L-glutamate ligase from Pseudomonas putida (strain W619).